The chain runs to 242 residues: 7-cyano-7-deazaguanine synthase (242 aa).

The segment at 1–22 (MNSSSNEKNKDLNRKNFSSKTD) is disordered. An ATP-binding site is contributed by 32–42 (LSGGLDSTTCL). The Zn(2+) site is built by Cys-212, Cys-221, Cys-224, and Cys-227.

This sequence belongs to the QueC family. Zn(2+) is required as a cofactor.

It catalyses the reaction 7-carboxy-7-deazaguanine + NH4(+) + ATP = 7-cyano-7-deazaguanine + ADP + phosphate + H2O + H(+). The protein operates within purine metabolism; 7-cyano-7-deazaguanine biosynthesis. Catalyzes the ATP-dependent conversion of 7-carboxy-7-deazaguanine (CDG) to 7-cyano-7-deazaguanine (preQ(0)). This is 7-cyano-7-deazaguanine synthase from Leptospira interrogans serogroup Icterohaemorrhagiae serovar copenhageni (strain Fiocruz L1-130).